Consider the following 605-residue polypeptide: Translation factor GUF1 homolog, chloroplastic (605 aa).

Positions 7–189 (RRIRNFSIIA…RIVQVVPPPR (183 aa)) constitute a tr-type G domain. GTP-binding positions include 16-23 (AHIDHGKS), 82-86 (DTPGH), and 136-139 (NKID).

The protein belongs to the TRAFAC class translation factor GTPase superfamily. Classic translation factor GTPase family. LepA subfamily.

It localises to the plastid. It is found in the chloroplast. It carries out the reaction GTP + H2O = GDP + phosphate + H(+). Its function is as follows. Promotes chloroplast protein synthesis. May act as a fidelity factor of the translation reaction, by catalyzing a one-codon backward translocation of tRNAs on improperly translocated ribosomes. In Ostreococcus lucimarinus (strain CCE9901), this protein is Translation factor GUF1 homolog, chloroplastic.